We begin with the raw amino-acid sequence, 211 residues long: Thymidylate kinase (211 aa).

11–18 lines the ATP pocket; the sequence is GPDGAGKT.

It belongs to the thymidylate kinase family.

It catalyses the reaction dTMP + ATP = dTDP + ADP. Functionally, phosphorylation of dTMP to form dTDP in both de novo and salvage pathways of dTTP synthesis. The chain is Thymidylate kinase from Streptococcus pyogenes serotype M18 (strain MGAS8232).